The following is a 142-amino-acid chain: Nucleoside diphosphate kinase (142 aa).

ATP-binding residues include lysine 11, phenylalanine 59, arginine 87, threonine 93, arginine 107, and asparagine 117. Histidine 120 serves as the catalytic Pros-phosphohistidine intermediate.

The protein belongs to the NDK family. In terms of assembly, homotetramer. Mg(2+) serves as cofactor.

It is found in the cytoplasm. It catalyses the reaction a 2'-deoxyribonucleoside 5'-diphosphate + ATP = a 2'-deoxyribonucleoside 5'-triphosphate + ADP. The catalysed reaction is a ribonucleoside 5'-diphosphate + ATP = a ribonucleoside 5'-triphosphate + ADP. Its function is as follows. Major role in the synthesis of nucleoside triphosphates other than ATP. The ATP gamma phosphate is transferred to the NDP beta phosphate via a ping-pong mechanism, using a phosphorylated active-site intermediate. The protein is Nucleoside diphosphate kinase of Aquifex aeolicus (strain VF5).